The chain runs to 432 residues: MTQLQEARKGIITPEMVQAAELEGITGEELRQKIAIGEAVLPCNINHQGLRPMAVGKGLSTKVNANIGTSDAYPELAPELSKLEIAVAAGVHSIMDLSTGGDIDEIRRRIIQDSPVMVGTVPLYQVMVDTHKAGRGLVEMTDDEIFAGIEKHCRDGADFITVHCGVTLEVIQELREQGRVMDIVSRGGSFITAWMLHHQRQNPLFEQYDRLLNIALHYDVTLSLGDGLRPGCLADATDGPQIKELITLGSLVKRAQEAGVQVMVEGPGHVPLHQIETNMQLAKTLCHNAPFYVLGPLVTDVAPGYDHITSAIGGAIAASSGADFLCYVTPAEHLGLPTEEDVKEGVIAARIAAHAADLVKGIKGAWEWDLEMAKARKALDWPKQIQLSIDPEKAGRMRKAKNEDSQERCTMCGKFCAYQLISDYMGTPFKGC.

Substrate-binding positions include N66, M95, Y124, H163, 185 to 187 (SRG), 226 to 229 (DGLR), and E265. H269 serves as a coordination point for Zn(2+). Y292 contacts substrate. Zn(2+) is bound at residue H333. Residues C409, C412, and C416 each coordinate [4Fe-4S] cluster.

The protein belongs to the ThiC family. The cofactor is [4Fe-4S] cluster.

It carries out the reaction 5-amino-1-(5-phospho-beta-D-ribosyl)imidazole + S-adenosyl-L-methionine = 4-amino-2-methyl-5-(phosphooxymethyl)pyrimidine + CO + 5'-deoxyadenosine + formate + L-methionine + 3 H(+). Its pathway is cofactor biosynthesis; thiamine diphosphate biosynthesis. Its function is as follows. Catalyzes the synthesis of the hydroxymethylpyrimidine phosphate (HMP-P) moiety of thiamine from aminoimidazole ribotide (AIR) in a radical S-adenosyl-L-methionine (SAM)-dependent reaction. The polypeptide is Phosphomethylpyrimidine synthase (Desulfitobacterium hafniense (strain DSM 10664 / DCB-2)).